The sequence spans 74 residues: U-scoloptoxin(09)-Sm3a (74 aa).

A signal peptide spans 1 to 22 (MNANSIFLCFFIMLIGCTLTHS).

This sequence belongs to the scoloptoxin-09 family. Contains 3 disulfide bonds. As to expression, expressed by the venom gland.

The protein resides in the secreted. This chain is U-scoloptoxin(09)-Sm3a, found in Scolopendra morsitans (Tanzanian blue ringleg centipede).